We begin with the raw amino-acid sequence, 390 residues long: Neutrophil cytosol factor 1 (390 aa).

A PX domain is found at 4-125 (TFIRHIALLG…DFFKVRPDDL (122 aa)). SH3 domains are found at residues 156–215 (IILQ…PLDS) and 226–285 (YAGE…KAGE). The interval 291–390 (QRQIRGRGAP…STKRKLTSAV (100 aa)) is disordered. Phosphoserine is present on residues Ser304, Ser321, Ser329, and Ser346. Basic and acidic residues predominate over residues 374–383 (ILHRCTESTK).

Component of the phagocyte NADPH oxidase complex composed of an obligatory core heterodimer formed by the membrane proteins CYBA and CYBB and the cytosolic regulatory subunits NCF1/p47-phox, NCF2/p67-phox, NCF4/p40-phox and the small GTPase RAC1 or RAC2. Part of a cytosolic complex composed at least by NCF1, NCF2 and NCF4. Interacts (via C-terminus) with NCF2 (via the C-terminal SH3 domain). Interacts with NCF4. Interacts with CYBB. Interacts (via the second SH3 domain) with CYBA; interaction is phosphorylation-dependent. Interacts with NOXA1. Interacts with ADAM15. Interacts with TRAF4. Interacts with FASLG. Interacts with PARK7 (via C-terminus); the interaction is enhanced by LPS and modulates NCF1 phosphorylation and membrane translocation. Phosphorylated by PRKCD; phosphorylation induces activation of NCF1, leading to assembly and activation of the NADPH oxidase complex.

The protein localises to the cytoplasm. The protein resides in the cytosol. It is found in the membrane. Subunit of the phagocyte NADPH oxidase complex that mediates the transfer of electrons from cytosolic NADPH to O2 to produce the superoxide anion (O2(-)). In the activated complex, electrons are first transferred from NADPH to flavin adenine dinucleotide (FAD) and subsequently transferred via two heme molecules to molecular oxygen, producing superoxide through an outer-sphere reaction. Activation of the NADPH oxidase complex is initiated by the assembly of cytosolic subunits of the NADPH oxidase complex with the core NADPH oxidase complex to form a complex at the plasma membrane or phagosomal membrane. This activation process is initiated by phosphorylation dependent binding of the cytosolic NCF1/p47-phox subunit to the C-terminus of CYBA/p22-phox. This is Neutrophil cytosol factor 1 from Mus musculus (Mouse).